Consider the following 246-residue polypeptide: Protein phosphatase PhpP (246 aa).

One can recognise a PPM-type phosphatase domain in the interval 2 to 240; it reads EISLLTDVGQ…DNITVALVSM (239 aa). Positions 36, 37, 192, and 231 each coordinate Mn(2+).

Belongs to the PP2C family. Mn(2+) is required as a cofactor.

Its subcellular location is the cytoplasm. The enzyme catalyses O-phospho-L-seryl-[protein] + H2O = L-seryl-[protein] + phosphate. It catalyses the reaction O-phospho-L-threonyl-[protein] + H2O = L-threonyl-[protein] + phosphate. Its function is as follows. Protein phosphatase able to dephosphorylate StkP-P and other phosphorylated protein substrates. PhpP and its cognate protein kinase StkP appear to constitute a functional signaling couple in vivo, PhpP's primary role being probably to control phosphorylation levels of StkP and of its targets. PhpP thus performs an essential control of StkP activity. Also dephosphorylates DivIVA in vivo. The polypeptide is Protein phosphatase PhpP (phpP) (Streptococcus pneumoniae serotype 2 (strain D39 / NCTC 7466)).